A 484-amino-acid polypeptide reads, in one-letter code: Cysteine--tRNA ligase (484 aa).

Cys-29 serves as a coordination point for Zn(2+). A 'HIGH' region motif is present at residues 31–41 (PTVQSAPHIGH). Zn(2+) is bound by residues Cys-219, His-244, and Glu-248. The 'KMSKS' region signature appears at 275–279 (KMSKS). Residue Lys-278 participates in ATP binding.

It belongs to the class-I aminoacyl-tRNA synthetase family. As to quaternary structure, monomer. Requires Zn(2+) as cofactor.

The protein resides in the cytoplasm. The enzyme catalyses tRNA(Cys) + L-cysteine + ATP = L-cysteinyl-tRNA(Cys) + AMP + diphosphate. The polypeptide is Cysteine--tRNA ligase (Clavibacter michiganensis subsp. michiganensis (strain NCPPB 382)).